A 131-amino-acid chain; its full sequence is Glycine cleavage system H protein (131 aa).

The Lipoyl-binding domain occupies 24 to 106 (RVTVGISDHA…YGDGWMYVVE (83 aa)). Lys65 carries the N6-lipoyllysine modification.

This sequence belongs to the GcvH family. The glycine cleavage system is composed of four proteins: P, T, L and H. It depends on (R)-lipoate as a cofactor.

Its function is as follows. The glycine cleavage system catalyzes the degradation of glycine. The H protein shuttles the methylamine group of glycine from the P protein to the T protein. The protein is Glycine cleavage system H protein of Stenotrophomonas maltophilia (strain R551-3).